Reading from the N-terminus, the 368-residue chain is tRNA-cytidine(32) 2-sulfurtransferase (368 aa).

Residues 95–100 (SGGKDS) carry the PP-loop motif motif. The [4Fe-4S] cluster site is built by C170, C173, and C261.

Belongs to the TtcA family. Homodimer. It depends on Mg(2+) as a cofactor. Requires [4Fe-4S] cluster as cofactor.

Its subcellular location is the cytoplasm. It catalyses the reaction cytidine(32) in tRNA + S-sulfanyl-L-cysteinyl-[cysteine desulfurase] + AH2 + ATP = 2-thiocytidine(32) in tRNA + L-cysteinyl-[cysteine desulfurase] + A + AMP + diphosphate + H(+). Its pathway is tRNA modification. Its function is as follows. Catalyzes the ATP-dependent 2-thiolation of cytidine in position 32 of tRNA, to form 2-thiocytidine (s(2)C32). The sulfur atoms are provided by the cysteine/cysteine desulfurase (IscS) system. This chain is tRNA-cytidine(32) 2-sulfurtransferase, found in Psychrobacter sp. (strain PRwf-1).